Consider the following 317-residue polypeptide: Zinc finger protein CRM3 (317 aa).

The span at 1–15 (MNFSLSKQSSEKQSS) shows a compositional bias: low complexity. The tract at residues 1 to 22 (MNFSLSKQSSEKQSSYTDKSRS) is disordered. C2H2-type zinc fingers lie at residues 254-276 (KQCP…YLIH) and 282-306 (FKCT…LKSH).

It localises to the nucleus. In terms of biological role, probable transcription factor involved in the regulation of the transcription of genes involved in cell rescue and defense, as well as cell cycle and DNA processing. The sequence is that of Zinc finger protein CRM3 from Saccharomyces cerevisiae (strain ATCC 204508 / S288c) (Baker's yeast).